Here is a 102-residue protein sequence, read N- to C-terminus: MTEHNHDSQLEINNEEELLTLFDEEGNEVLYRKVLEFYHPEFKKEYVILAEEGAQSDEDDMIELVPMINEPDESGDGGKLVPIETDEEWDMIEEVVNTEMEE.

It belongs to the UPF0473 family.

This chain is UPF0473 protein SAS1551, found in Staphylococcus aureus (strain MSSA476).